The following is a 156-amino-acid chain: SsrA-binding protein (156 aa).

Belongs to the SmpB family.

Its subcellular location is the cytoplasm. Required for rescue of stalled ribosomes mediated by trans-translation. Binds to transfer-messenger RNA (tmRNA), required for stable association of tmRNA with ribosomes. tmRNA and SmpB together mimic tRNA shape, replacing the anticodon stem-loop with SmpB. tmRNA is encoded by the ssrA gene; the 2 termini fold to resemble tRNA(Ala) and it encodes a 'tag peptide', a short internal open reading frame. During trans-translation Ala-aminoacylated tmRNA acts like a tRNA, entering the A-site of stalled ribosomes, displacing the stalled mRNA. The ribosome then switches to translate the ORF on the tmRNA; the nascent peptide is terminated with the 'tag peptide' encoded by the tmRNA and targeted for degradation. The ribosome is freed to recommence translation, which seems to be the essential function of trans-translation. This chain is SsrA-binding protein, found in Trichodesmium erythraeum (strain IMS101).